The following is a 310-amino-acid chain: Ribosomal RNA small subunit methyltransferase H (310 aa).

S-adenosyl-L-methionine-binding positions include 33–35 (AGH), D53, F79, D100, and Q107.

The protein belongs to the methyltransferase superfamily. RsmH family.

It localises to the cytoplasm. The enzyme catalyses cytidine(1402) in 16S rRNA + S-adenosyl-L-methionine = N(4)-methylcytidine(1402) in 16S rRNA + S-adenosyl-L-homocysteine + H(+). Functionally, specifically methylates the N4 position of cytidine in position 1402 (C1402) of 16S rRNA. The sequence is that of Ribosomal RNA small subunit methyltransferase H from Clostridium tetani (strain Massachusetts / E88).